The primary structure comprises 354 residues: 3-isopropylmalate dehydrogenase (354 aa).

Position 73-86 (73-86 (GPAYDKLDRPLRPE)) interacts with NAD(+). Arg93, Arg103, Arg131, and Asp221 together coordinate substrate. Residues Asp221, Asp245, and Asp249 each contribute to the Mg(2+) site. Residue 279–291 (GSAPDIAGQNLAN) coordinates NAD(+).

This sequence belongs to the isocitrate and isopropylmalate dehydrogenases family. LeuB type 1 subfamily. Homodimer. Requires Mg(2+) as cofactor. Mn(2+) is required as a cofactor.

The protein resides in the cytoplasm. The enzyme catalyses (2R,3S)-3-isopropylmalate + NAD(+) = 4-methyl-2-oxopentanoate + CO2 + NADH. The protein operates within amino-acid biosynthesis; L-leucine biosynthesis; L-leucine from 3-methyl-2-oxobutanoate: step 3/4. Its function is as follows. Catalyzes the oxidation of 3-carboxy-2-hydroxy-4-methylpentanoate (3-isopropylmalate) to 3-carboxy-4-methyl-2-oxopentanoate. The product decarboxylates to 4-methyl-2 oxopentanoate. The chain is 3-isopropylmalate dehydrogenase from Chromobacterium violaceum (strain ATCC 12472 / DSM 30191 / JCM 1249 / CCUG 213 / NBRC 12614 / NCIMB 9131 / NCTC 9757 / MK).